A 372-amino-acid chain; its full sequence is Putative isochorismate synthase MenF (372 aa).

Lysine 119 acts as the Proton acceptor in catalysis. Catalysis depends on glutamate 175, which acts as the Proton donor. Residues glutamate 219 and glutamate 356 each coordinate Mg(2+).

It belongs to the isochorismate synthase family. Requires Mg(2+) as cofactor.

It catalyses the reaction chorismate = isochorismate. The protein operates within quinol/quinone metabolism; 1,4-dihydroxy-2-naphthoate biosynthesis; 1,4-dihydroxy-2-naphthoate from chorismate: step 1/7. It participates in quinol/quinone metabolism; menaquinone biosynthesis. Catalyzes the conversion of chorismate to isochorismate. This is Putative isochorismate synthase MenF (menF) from Mycobacterium tuberculosis (strain CDC 1551 / Oshkosh).